The chain runs to 488 residues: Glutamyl-tRNA(Gln) amidotransferase subunit A (488 aa).

Catalysis depends on charge relay system residues K78 and S153. The active-site Acyl-ester intermediate is S177.

It belongs to the amidase family. GatA subfamily. Heterotrimer of A, B and C subunits.

It catalyses the reaction L-glutamyl-tRNA(Gln) + L-glutamine + ATP + H2O = L-glutaminyl-tRNA(Gln) + L-glutamate + ADP + phosphate + H(+). Its function is as follows. Allows the formation of correctly charged Gln-tRNA(Gln) through the transamidation of misacylated Glu-tRNA(Gln) in organisms which lack glutaminyl-tRNA synthetase. The reaction takes place in the presence of glutamine and ATP through an activated gamma-phospho-Glu-tRNA(Gln). The protein is Glutamyl-tRNA(Gln) amidotransferase subunit A of Thermoanaerobacter pseudethanolicus (strain ATCC 33223 / 39E) (Clostridium thermohydrosulfuricum).